The following is a 609-amino-acid chain: UvrABC system protein C (609 aa).

The region spanning 16-94 (HLPGVYRHLD…IKSLRPRYNI (79 aa)) is the GIY-YIG domain. Positions 203–238 (REVMDEIEARMLQASTELRFEEAAVLRDQMGSLSKV) constitute a UVR domain.

Belongs to the UvrC family. In terms of assembly, interacts with UvrB in an incision complex.

The protein localises to the cytoplasm. Its function is as follows. The UvrABC repair system catalyzes the recognition and processing of DNA lesions. UvrC both incises the 5' and 3' sides of the lesion. The N-terminal half is responsible for the 3' incision and the C-terminal half is responsible for the 5' incision. This Bordetella bronchiseptica (strain ATCC BAA-588 / NCTC 13252 / RB50) (Alcaligenes bronchisepticus) protein is UvrABC system protein C.